A 307-amino-acid chain; its full sequence is NmrA-like family domain-containing oxidoreductase flvB (307 aa).

Residues 4-9 (LITGAT), 32-36 (SSSSP), 53-54 (DY), 74-76 (STN), and 148-151 (YVEG) each bind NADP(+).

It belongs to the NmrA-type oxidoreductase family.

It catalyses the reaction (2S)-5,5-dimethyl-2,3,4,5-tetrahydropyridine-2,6-dicarboxylate + NADPH + 2 H(+) = (6S)-3,3-dimethylpiperidine-2,6-dicarboxylate + NADP(+). The enzyme catalyses (2S)-5,5-dimethyl-2,3,4,5-tetrahydropyridine-2,6-dicarboxylate + NADH + 2 H(+) = (6S)-3,3-dimethylpiperidine-2,6-dicarboxylate + NAD(+). The protein operates within secondary metabolite biosynthesis; terpenoid biosynthesis. In terms of biological role, nmrA-like family domain-containing oxidoreductase; part of the gene cluster that mediates the biosynthesis of flavunoidine, an alkaloidal terpenoid with a tetracyclic cage-like core connected to dimethylcadaverine via a C-N bond and acylated with 5,5-dimethyl-L-pipecolate. The tetracyclic core is synthesized by the terpene cyclase flvE and the cytochrome P450 monooxygenase flvD. The terpene cyclase flvE catalyzes the cyclization of farnesyl pyrophosphate (FPP) to form (1R,4R,5S)-(+)-acoradiene and the cytochrome P450 monooxygenase flvD is then responsible for oxidative conversion of (1R,4R,5S)-(+)-acoradiene into the tetracyclic cage present in the final product flavunoidine. In parallel, the N-methyltransferase flvH dimethylates L-lysine to give N,N-dimethyl-L-Lysin which is decarboxylated by flvG to afford dimethylcadaverine. The terpene cyclase-like protein flvF is the enzyme that attaches the dimethylcadaverine precusor at the C-7 of the tetracyclic cage to yield pre-flavunoidine. The cytochrome monooxygenase flvC hydroxylates the C-10 position of pre-flavunoidine whereas the NRPS flvI acylates the terpenoid core at the hydroxylated C-10 with dimethylpipecolate to yield final flavunoidine. The bifunctional enzyme flvA and the dehydrogenase flvB are responsible for the synthesis of the dimethylpipecolate precursor. The PLP-dependent lyase domain of flvA might use L-O-acetyl-homoserine and alpha-keto-isovalerate to form an intermediary ketone that can cyclize intramolecularly to yield an imine. The imine can be reduced by flvB to yield the 6-carboxylated pipecolate. The C-terminal alpha-KG-dependent oxygenase domain of flvA is then proposed to catalyze the decarboxylation to yield dimethylpipecolate. This Aspergillus flavus (strain ATCC 200026 / FGSC A1120 / IAM 13836 / NRRL 3357 / JCM 12722 / SRRC 167) protein is NmrA-like family domain-containing oxidoreductase flvB.